Reading from the N-terminus, the 342-residue chain is Probable deoxyhypusine synthase (342 aa).

Lys307 acts as the Nucleophile in catalysis.

This sequence belongs to the deoxyhypusine synthase family. The cofactor is NAD(+).

The catalysed reaction is [eIF5A protein]-L-lysine + spermidine = [eIF5A protein]-deoxyhypusine + propane-1,3-diamine. The protein operates within protein modification; eIF5A hypusination. Functionally, catalyzes the NAD-dependent oxidative cleavage of spermidine and the subsequent transfer of the butylamine moiety of spermidine to the epsilon-amino group of a specific lysine residue of the eIF-5A precursor protein to form the intermediate deoxyhypusine residue. This Pyrococcus horikoshii (strain ATCC 700860 / DSM 12428 / JCM 9974 / NBRC 100139 / OT-3) protein is Probable deoxyhypusine synthase (dys).